Here is a 433-residue protein sequence, read N- to C-terminus: Alpha-(1,3)-fucosyltransferase 4 (433 aa).

Topologically, residues 1-52 (MAPARQELQHESRCRPSRTVDAWRAAVATRGRHMETPGYRRRTRCGGWGLPR) are cytoplasmic. A helical; Signal-anchor for type II membrane protein transmembrane segment spans residues 53 to 74 (SVSSLAAVGLLCTALTTFICWG). Residues 75–433 (QLPPLPWASP…IHNLADWFQR (359 aa)) are Lumenal-facing. N117 and N218 each carry an N-linked (GlcNAc...) asparagine glycan.

It belongs to the glycosyltransferase 10 family. Highest expression in stomach and colon. It is also expressed in the lung, testis, uterus, small intestine and to a lesser extent in spleen, and ovary. Present in trace amounts in brain, thymus, heart, smooth muscle, kidney and bone marrow. Not found in liver, salivary gland and pancreas.

The protein resides in the golgi apparatus. Its subcellular location is the golgi stack membrane. The enzyme catalyses a beta-D-galactosyl-(1-&gt;4)-N-acetyl-beta-D-glucosaminyl derivative + GDP-beta-L-fucose = a beta-D-galactosyl-(1-&gt;4)-[alpha-L-fucosyl-(1-&gt;3)]-N-acetyl-beta-D-glucosaminyl derivative + GDP + H(+). It carries out the reaction an N-acetyl-alpha-neuraminyl-(2-&gt;3)-beta-D-galactosyl-(1-&gt;4)-N-acetyl-beta-D-glucosaminyl derivative + GDP-beta-L-fucose = an alpha-Neu5Ac-(2-&gt;3)-beta-D-Gal-(1-&gt;4)-[alpha-L-Fuc-(1-&gt;3)]-beta-D-GlcNAc derivative + GDP + H(+). The catalysed reaction is an alpha-Neu5Ac-(2-&gt;3)-beta-D-Gal-(1-&gt;4)-beta-D-GlcNAc-(1-&gt;3)-beta-D-Gal-(1-&gt;4)-beta-D-GlcNAc derivative + GDP-beta-L-fucose = an alpha-Neu5Ac-(2-&gt;3)-beta-D-Gal-(1-&gt;4)-beta-D-GlcNAc-(1-&gt;3)-beta-D-Gal-(1-&gt;4)-[alpha-L-Fuc-(1-&gt;3)]-beta-D-GlcNAc derivative + GDP + H(+). It catalyses the reaction an alpha-Neu5Ac-(2-&gt;3)-beta-D-Gal-(1-&gt;4)-beta-D-GlcNAc6S derivative + GDP-beta-L-fucose = an alpha-Neu5Ac-(2-&gt;3)-beta-D-Gal-(1-&gt;4)-[alpha-L-Fuc-(1-&gt;3)]-beta-D-GlcNAc6S derivative + GDP + H(+). It functions in the pathway protein modification; protein glycosylation. In terms of biological role, catalyzes alpha(1-&gt;3) linkage of fucosyl moiety transferred from GDP-beta-L-fucose to N-acetyl glucosamine (GlcNAc) within type 2 lactosamine (LacNAc, Gal-beta(1-&gt;4)GlcNAc) glycan attached to N- or O-linked glycoproteins. Robustly fucosylates nonsialylated distal LacNAc unit of the polylactosamine chain to form Lewis X antigen (CD15), a glycan determinant known to mediate important cellular functions in development and immunity. Fucosylates with lower efficiency sialylated LacNAc acceptors to form sialyl Lewis X and 6-sulfo sialyl Lewis X determinants that serve as recognition epitopes for C-type lectins. Together with FUT7 contributes to SELE, SELL and SELP selectin ligand biosynthesis and selectin-dependent lymphocyte homing, leukocyte migration and blood leukocyte homeostasis. In a cell type specific manner, may also fucosylate the internal LacNAc unit of the polylactosamine chain to form VIM-2 antigen that serves as recognition epitope for SELE. This is Alpha-(1,3)-fucosyltransferase 4 (Fut4) from Mus musculus (Mouse).